Reading from the N-terminus, the 381-residue chain is Ceramide-binding protein svf-1 (381 aa).

Positions 1-18 (MFKWAQAALANVAGTKEP) are peripherally associates with membranes.

The protein belongs to the SVF1 family.

The protein localises to the golgi apparatus. It is found in the cis-Golgi network membrane. The protein resides in the endoplasmic reticulum membrane. It localises to the cytoplasm. Its subcellular location is the nucleus. Its function is as follows. Ceramide-binding protein that may transfer ceramides from the endoplasmic reticulum membrane to the cis-Golgi network membrane, and is thereby required for the biosynthesis of complex sphingolipids. This chain is Ceramide-binding protein svf-1 (svf-1), found in Neurospora crassa (strain ATCC 24698 / 74-OR23-1A / CBS 708.71 / DSM 1257 / FGSC 987).